The primary structure comprises 822 residues: Probable RING finger protein 207 homolog (822 aa).

The RING-type zinc-finger motif lies at 8-42 (CTICKNEFEEPILLSCQHTTCRKCSTGSPSCKSCS). The segment at 68-115 (EEMEECANCEQISLPMFYCETCQQSLCLVCRNVTHQARMFSSHKIISS) adopts a B box-type 1; atypical zinc-finger fold. Zn(2+) contacts are provided by Cys73, Cys76, Cys97, and His102. A B box-type 2; degenerate zinc finger spans residues 122 to 164 (YSSSLCKDHNEPYILYCSDVRKLVCIQCFNGRPLEERHSFISI). 2 coiled-coil regions span residues 526 to 558 (NSQNRILAIEKEEENRRLNQEAKKKEELAGQSA) and 738 to 769 (DKDEVIEKEEIEKETEKEKKKVIRRRVKKVSE).

In Caenorhabditis elegans, this protein is Probable RING finger protein 207 homolog.